The sequence spans 452 residues: Phosphoglucosamine mutase (452 aa).

Residue S104 is the Phosphoserine intermediate of the active site. Mg(2+) contacts are provided by S104, D246, D248, and D250. S104 is subject to Phosphoserine.

Belongs to the phosphohexose mutase family. Mg(2+) is required as a cofactor. Activated by phosphorylation.

The enzyme catalyses alpha-D-glucosamine 1-phosphate = D-glucosamine 6-phosphate. Catalyzes the conversion of glucosamine-6-phosphate to glucosamine-1-phosphate. The sequence is that of Phosphoglucosamine mutase from Streptomyces avermitilis (strain ATCC 31267 / DSM 46492 / JCM 5070 / NBRC 14893 / NCIMB 12804 / NRRL 8165 / MA-4680).